A 155-amino-acid polypeptide reads, in one-letter code: RNA pyrophosphohydrolase (155 aa).

One can recognise a Nudix hydrolase domain in the interval 6–148 (GYRANVAIVL…KQDVYRRALT (143 aa)). The Nudix box motif lies at 38-59 (GGVATGETPLQAMYRELYEEVG).

This sequence belongs to the Nudix hydrolase family. RppH subfamily. Requires a divalent metal cation as cofactor.

Accelerates the degradation of transcripts by removing pyrophosphate from the 5'-end of triphosphorylated RNA, leading to a more labile monophosphorylated state that can stimulate subsequent ribonuclease cleavage. In Francisella philomiragia subsp. philomiragia (strain ATCC 25017 / CCUG 19701 / FSC 153 / O#319-036), this protein is RNA pyrophosphohydrolase.